Here is a 137-residue protein sequence, read N- to C-terminus: MLQPKRTKFRKMQKGRNRGLALDTNVNFGTFGLKAVDRGRLTARQIEAARRTITRAIKRQGKIWIRIFPDKPITEKPLEVRMGKGKGNVENWVALIKPGKILYEIDGVTEELAREALRLAAAKLPMKTTFANKMILS.

It belongs to the universal ribosomal protein uL16 family. In terms of assembly, part of the 50S ribosomal subunit.

Its function is as follows. Binds 23S rRNA and is also seen to make contacts with the A and possibly P site tRNAs. The sequence is that of Large ribosomal subunit protein uL16 from Baumannia cicadellinicola subsp. Homalodisca coagulata.